The chain runs to 361 residues: Ataxin-3 (361 aa).

M1 participates in a covalent cross-link: Peptide (Met-Gly) (interchain with G-Cter in ubiquitin). One can recognise a Josephin domain in the interval 1–180; the sequence is MESIFHEKQE…DCEADQLLQM (180 aa). C14 functions as the Nucleophile in the catalytic mechanism. The active-site Proton acceptor is the H119. The active site involves N134. K200 participates in a covalent cross-link: Glycyl lysine isopeptide (Lys-Gly) (interchain with G-Cter in ubiquitin). Residue S219 is modified to Phosphoserine. UIM domains lie at 224-243 and 244-263; these read EDEEDLQRALALSRQEIDME and DEEADLRRAIQLSMQGSSRN. Over residues 258-278 the composition is skewed to polar residues; it reads QGSSRNISQDMTQTSGTNLTS. The tract at residues 258 to 338 is disordered; that stretch reads QGSSRNISQD…DLGDAMSEED (81 aa). Phosphoserine is present on residues S265 and S272. Over residues 279–293 the composition is skewed to basic and acidic residues; sequence EELRKRREAYFEKQQ. Residues 294–305 are compositionally biased toward low complexity; that stretch reads QKQQQQQQQQQQ. The segment covering 306–325 has biased composition (polar residues); sequence GDLSGQSSHPCERPATSSGA. At S328 the chain carries Phosphoserine. One can recognise a UIM 3 domain in the interval 331–349; sequence GDAMSEEDMLQAAVTMSLE.

In terms of assembly, interacts with STUB1/CHIP (when monoubiquitinated). Interacts with DNA repair proteins RAD23A and RAD23B. Interacts with BECN1 (via its poly-Gln domain). Interacts with PRKN, UBR2, VCP and tubulin. Short isoform 1 interacts with CASP7. Monoubiquitinated N-terminally by UBE2W, possibly leading to activate the deubiquitinating enzyme activity. In terms of tissue distribution, ubiquitous.

The protein resides in the nucleus matrix. The protein localises to the nucleus. It is found in the lysosome membrane. The enzyme catalyses Thiol-dependent hydrolysis of ester, thioester, amide, peptide and isopeptide bonds formed by the C-terminal Gly of ubiquitin (a 76-residue protein attached to proteins as an intracellular targeting signal).. In terms of biological role, deubiquitinating enzyme involved in protein homeostasis maintenance, transcription, cytoskeleton regulation, myogenesis and degradation of misfolded chaperone substrates. Binds long polyubiquitin chains and trims them, while it has weak or no activity against chains of 4 or less ubiquitins. Involved in degradation of misfolded chaperone substrates via its interaction with STUB1/CHIP: recruited to monoubiquitinated STUB1/CHIP, and restricts the length of ubiquitin chain attached to STUB1/CHIP substrates and preventing further chain extension. Interacts with key regulators of transcription and represses transcription: acts as a histone-binding protein that regulates transcription. Acts as a negative regulator of mTORC1 signaling in response to amino acid deprivation by mediating deubiquitination of RHEB, thereby promoting RHEB inactivation by the TSC-TBC complex. Regulates autophagy via the deubiquitination of 'Lys-402' of BECN1 leading to the stabilization of BECN1. The chain is Ataxin-3 from Homo sapiens (Human).